A 393-amino-acid chain; its full sequence is Putative serpin-Z6A (393 aa).

An RCL region spans residues 336 to 360; that stretch reads GTEAAAATAVLMEGAARYAPPPPPR.

The protein belongs to the serpin family.

In terms of biological role, probable serine protease inhibitor. In Oryza sativa subsp. japonica (Rice), this protein is Putative serpin-Z6A.